The primary structure comprises 333 residues: Electron transfer flavoprotein subunit alpha, mitochondrial (333 aa).

A mitochondrion-targeting transit peptide spans Met-1–Phe-19. The tract at residues Gln-20–Leu-204 is domain I. Lys-59 carries the post-translational modification N6-acetyllysine; alternate. Lys-59 is modified (N6-succinyllysine; alternate). An N6-acetyllysine modification is found at Lys-62. Lys-69 carries the post-translational modification N6-acetyllysine; alternate. At Lys-69 the chain carries N6-succinyllysine; alternate. At Lys-75 the chain carries N6-acetyllysine. Thr-93 carries the post-translational modification Phosphothreonine. 2 positions are modified to N6-acetyllysine: Lys-101 and Lys-139. Ser-140 is subject to Phosphoserine. Lys-158 is modified (N6-acetyllysine; alternate). Lys-158 carries the N6-succinyllysine; alternate modification. Lys-164 carries the post-translational modification N6-acetyllysine. Lys-187 is modified (N6-succinyllysine). The residue at position 203 (Lys-203) is an N6-acetyllysine; alternate. Lys-203 is subject to N6-succinyllysine; alternate. The domain II stretch occupies residues Thr-205–Lys-333. At Lys-216 the chain carries N6-succinyllysine. Arg-223 serves as a coordination point for FAD. An N6-acetyllysine; alternate mark is found at Lys-226 and Lys-232. N6-succinyllysine; alternate occurs at positions 226 and 232. FAD contacts are provided by residues Ser-248, Val-263–Thr-266, Ser-281–His-286, and Asn-300. Lys-301 bears the N6-succinyllysine mark. Asp-318–Leu-319 is an FAD binding site.

This sequence belongs to the ETF alpha-subunit/FixB family. In terms of assembly, heterodimer composed of ETFA and ETFB. Identified in a complex that contains ETFA, ETFB and ETFRF1. Interaction with ETFRF1 promotes dissociation of the bound FAD and loss of electron transfer activity. Interacts with TASOR. FAD is required as a cofactor.

Its subcellular location is the mitochondrion matrix. Its function is as follows. Heterodimeric electron transfer flavoprotein that accepts electrons from several mitochondrial dehydrogenases, including acyl-CoA dehydrogenases, glutaryl-CoA and sarcosine dehydrogenase. It transfers the electrons to the main mitochondrial respiratory chain via ETF-ubiquinone oxidoreductase (ETF dehydrogenase). Required for normal mitochondrial fatty acid oxidation and normal amino acid metabolism. The protein is Electron transfer flavoprotein subunit alpha, mitochondrial (ETFA) of Macaca fascicularis (Crab-eating macaque).